Consider the following 359-residue polypeptide: Fructose-bisphosphate aldolase (359 aa).

Residue S61 participates in D-glyceraldehyde 3-phosphate binding. D109 acts as the Proton donor in catalysis. 4 residues coordinate Zn(2+): H110, D144, E174, and H226. G227 contributes to the dihydroxyacetone phosphate binding site. H265 contacts Zn(2+). Dihydroxyacetone phosphate-binding positions include 266–268 (GGS) and 287–290 (NIDT).

It belongs to the class II fructose-bisphosphate aldolase family. Zn(2+) serves as cofactor.

It catalyses the reaction beta-D-fructose 1,6-bisphosphate = D-glyceraldehyde 3-phosphate + dihydroxyacetone phosphate. The protein operates within carbohydrate degradation; glycolysis; D-glyceraldehyde 3-phosphate and glycerone phosphate from D-glucose: step 4/4. Its function is as follows. Catalyzes the aldol condensation of dihydroxyacetone phosphate (DHAP or glycerone-phosphate) with glyceraldehyde 3-phosphate (G3P) to form fructose 1,6-bisphosphate (FBP) in gluconeogenesis and the reverse reaction in glycolysis. The protein is Fructose-bisphosphate aldolase (fba) of Borreliella burgdorferi (strain ATCC 35210 / DSM 4680 / CIP 102532 / B31) (Borrelia burgdorferi).